Reading from the N-terminus, the 239-residue chain is Fatty acid metabolism regulator protein (239 aa).

The 69-residue stretch at 6 to 74 (QSPAGFAEEY…HGKPTKVNNF (69 aa)) folds into the HTH gntR-type domain. The segment at residues 34 to 53 (ERELSELIGVTRTTLREVLQ) is a DNA-binding region (H-T-H motif).

In terms of assembly, homodimer.

Its subcellular location is the cytoplasm. Its function is as follows. Multifunctional regulator of fatty acid metabolism. This Enterobacter sp. (strain 638) protein is Fatty acid metabolism regulator protein.